We begin with the raw amino-acid sequence, 412 residues long: DNA replication and repair protein RecF (412 aa).

Position 30-37 (30-37 (GKNGLGKT)) interacts with ATP.

This sequence belongs to the RecF family.

It localises to the cytoplasm. Its function is as follows. The RecF protein is involved in DNA metabolism; it is required for DNA replication and normal SOS inducibility. RecF binds preferentially to single-stranded, linear DNA. It also seems to bind ATP. This chain is DNA replication and repair protein RecF, found in Bifidobacterium longum subsp. infantis (strain ATCC 15697 / DSM 20088 / JCM 1222 / NCTC 11817 / S12).